A 172-amino-acid chain; its full sequence is Cyclin-L1 (172 aa).

A disordered region spans residues 1 to 36 (MASGPHSTATAAAAASSAAPSAGGSSSGTTTTTTTT). Residues 88–168 (ELIQAAGILL…LRGKSDQLHL (81 aa)) are cyclin-like.

The protein belongs to the cyclin family. Cyclin L subfamily. As to quaternary structure, interacts with POLR2A via its hyperphosphorylated C-terminal domain (CTD). Interacts with CDK11A, CDK11B, CDK12 and CDK13. May form a ternary complex with CDK11B and casein kinase II (CKII). Interacts with pre-mRNA-splicing factors, including at least SRSF1, SRSF2 and SRSF7/SLU7.

Its subcellular location is the nucleus speckle. The protein localises to the nucleus. It localises to the nucleoplasm. In terms of biological role, involved in pre-mRNA splicing. Functions in association with cyclin-dependent kinases (CDKs). May play a role in the regulation of RNA polymerase II (pol II). Inhibited by the CDK-specific inhibitor CDKN1A/p21. The protein is Cyclin-L1 (CCNL1) of Pongo abelii (Sumatran orangutan).